We begin with the raw amino-acid sequence, 396 residues long: NADH-quinone oxidoreductase subunit D (396 aa).

The protein belongs to the complex I 49 kDa subunit family. NDH-1 is composed of 14 different subunits. Subunits NuoB, C, D, E, F, and G constitute the peripheral sector of the complex.

The protein resides in the cell inner membrane. It carries out the reaction a quinone + NADH + 5 H(+)(in) = a quinol + NAD(+) + 4 H(+)(out). Functionally, NDH-1 shuttles electrons from NADH, via FMN and iron-sulfur (Fe-S) centers, to quinones in the respiratory chain. The immediate electron acceptor for the enzyme in this species is believed to be ubiquinone. Couples the redox reaction to proton translocation (for every two electrons transferred, four hydrogen ions are translocated across the cytoplasmic membrane), and thus conserves the redox energy in a proton gradient. This chain is NADH-quinone oxidoreductase subunit D, found in Bartonella bacilliformis (strain ATCC 35685 / KC583 / Herrer 020/F12,63).